A 305-amino-acid chain; its full sequence is Dihydroorotate dehydrogenase B (NAD(+)), catalytic subunit (305 aa).

FMN contacts are provided by residues Ser21 and 45–46; that span reads KA. Substrate contacts are provided by residues Lys45 and 69 to 73; that span reads NAIGL. Asn99 and Asn127 together coordinate FMN. A substrate-binding site is contributed by Asn127. Catalysis depends on Cys130, which acts as the Nucleophile. Residues Lys165 and Ile191 each coordinate FMN. A substrate-binding site is contributed by 192–193; the sequence is NT. FMN contacts are provided by residues Gly217, 243–244, and 265–266; these read GG and GT.

Belongs to the dihydroorotate dehydrogenase family. Type 1 subfamily. Heterotetramer of 2 PyrK and 2 PyrD type B subunits. FMN serves as cofactor.

The protein resides in the cytoplasm. It catalyses the reaction (S)-dihydroorotate + NAD(+) = orotate + NADH + H(+). It functions in the pathway pyrimidine metabolism; UMP biosynthesis via de novo pathway; orotate from (S)-dihydroorotate (NAD(+) route): step 1/1. Catalyzes the conversion of dihydroorotate to orotate with NAD(+) as electron acceptor. The chain is Dihydroorotate dehydrogenase B (NAD(+)), catalytic subunit (pyrD) from Halalkalibacterium halodurans (strain ATCC BAA-125 / DSM 18197 / FERM 7344 / JCM 9153 / C-125) (Bacillus halodurans).